A 487-amino-acid polypeptide reads, in one-letter code: Glutamate--tRNA ligase (487 aa).

The 'HIGH' region signature appears at 13 to 23; the sequence is PSPTGLFHIGG. A 'KMSKS' region motif is present at residues 255–259; the sequence is KLSKR. K258 provides a ligand contact to ATP.

This sequence belongs to the class-I aminoacyl-tRNA synthetase family. Glutamate--tRNA ligase type 1 subfamily. Monomer.

The protein resides in the cytoplasm. The enzyme catalyses tRNA(Glu) + L-glutamate + ATP = L-glutamyl-tRNA(Glu) + AMP + diphosphate. Its function is as follows. Catalyzes the attachment of glutamate to tRNA(Glu) in a two-step reaction: glutamate is first activated by ATP to form Glu-AMP and then transferred to the acceptor end of tRNA(Glu). This Malacoplasma penetrans (strain HF-2) (Mycoplasma penetrans) protein is Glutamate--tRNA ligase.